The sequence spans 498 residues: Succinate-semialdehyde dehydrogenase [NADP(+)] 1 (498 aa).

247 to 252 (GSTNVG) provides a ligand contact to NAD(+). Residues Glu-269 and Cys-303 contribute to the active site.

This sequence belongs to the aldehyde dehydrogenase family. In terms of assembly, homotetramer.

The protein localises to the cytoplasm. The catalysed reaction is succinate semialdehyde + NAD(+) + H2O = succinate + NADH + 2 H(+). The enzyme catalyses succinate semialdehyde + NADP(+) + H2O = succinate + NADPH + 2 H(+). The protein operates within amino-acid degradation; 4-aminobutanoate degradation. Catalyzes the oxidation of succinate semialdehyde to succinate. Can utilize both NAD(+) or NADP(+) as a coenzyme. Functions in a gamma-aminobutyrate (GABA) degradation pathway that allows growth utilizing GABA as a nitrogen source. Functions in the GABA shunt, which allows to bypass 2 reactions in the TCA cycle by removing alpha-ketoglutarate from the cycle and feeding succinate and NADH back into the cycle. The chain is Succinate-semialdehyde dehydrogenase [NADP(+)] 1 (ssd1) from Schizosaccharomyces pombe (strain 972 / ATCC 24843) (Fission yeast).